A 234-amino-acid polypeptide reads, in one-letter code: GTP cyclohydrolase 1 (234 aa).

The segment at 1–26 (MDALIKPLRAGKPDAKPADPKGTEFR) is disordered. Residues 11–26 (GKPDAKPADPKGTEFR) show a composition bias toward basic and acidic residues. Zn(2+) contacts are provided by C123, H126, and C194.

The protein belongs to the GTP cyclohydrolase I family. In terms of assembly, toroid-shaped homodecamer, composed of two pentamers of five dimers.

The catalysed reaction is GTP + H2O = 7,8-dihydroneopterin 3'-triphosphate + formate + H(+). It functions in the pathway cofactor biosynthesis; 7,8-dihydroneopterin triphosphate biosynthesis; 7,8-dihydroneopterin triphosphate from GTP: step 1/1. In Rhodopseudomonas palustris (strain BisB18), this protein is GTP cyclohydrolase 1.